The primary structure comprises 354 residues: Serum paraoxonase/lactonase 3 (354 aa).

Cysteine 42 and cysteine 352 are joined by a disulfide. Asparagine 50 carries N-linked (GlcNAc...) asparagine glycosylation. Ca(2+) is bound by residues glutamate 53 and aspartate 54. The Proton acceptor role is filled by histidine 114. Isoleucine 116 contacts Ca(2+). A Phosphoserine modification is found at serine 165. Residues asparagine 167, aspartate 168, asparagine 223, aspartate 268, and asparagine 269 each contribute to the Ca(2+) site. Asparagine 269 and asparagine 323 each carry an N-linked (GlcNAc...) asparagine glycan.

The protein belongs to the paraoxonase family. Homodimer. Requires Ca(2+) as cofactor. Post-translationally, glycosylated. In terms of processing, the signal sequence is not cleaved.

Its subcellular location is the secreted. It is found in the extracellular space. The catalysed reaction is a phenyl acetate + H2O = a phenol + acetate + H(+). The enzyme catalyses An aryl dialkyl phosphate + H2O = dialkyl phosphate + an aryl alcohol.. It carries out the reaction an N-acyl-L-homoserine lactone + H2O = an N-acyl-L-homoserine + H(+). Functionally, has low activity towards the organophosphate paraxon and aromatic carboxylic acid esters. Rapidly hydrolyzes lactones such as statin prodrugs (e.g. lovastatin). Hydrolyzes aromatic lactones and 5- or 6-member ring lactones with aliphatic substituents but not simple lactones or those with polar substituents. The polypeptide is Serum paraoxonase/lactonase 3 (Pon3) (Rattus norvegicus (Rat)).